Consider the following 162-residue polypeptide: MQSWYLLYCKRGQLQRAQEHLERQAVNCLAPMITLEKIVRGKRTAVSEPLFPNYLFVEFDPEVIHTTTINATRGVSHFVRFGASPAIVPSAVIHQLSVYKPKDIVDPSTPYPGDKVIITEGAFEGFQAIFTEPDGEARSMLLLNLINKEIKHSVKNTEFRKL.

It belongs to the RfaH family. Interacts with both the nontemplate DNA and the RNA polymerase (RNAP).

In terms of biological role, enhances distal genes transcription elongation in a specialized subset of operons that encode extracytoplasmic components. RfaH is recruited into a multi-component RNA polymerase complex by the ops element, which is a short conserved DNA sequence located downstream of the main promoter of these operons. Once bound, RfaH suppresses pausing and inhibits Rho-dependent and intrinsic termination at a subset of sites. Termination signals are bypassed, which allows complete synthesis of long RNA chains. Also negatively controls expression and surface presentation of AG43 and possibly another AG43-independent factor that mediates cell-cell interactions and biofilm formation,. In Escherichia coli O6:K15:H31 (strain 536 / UPEC), this protein is Transcription antitermination protein RfaH.